The chain runs to 782 residues: Protein PAT1 homolog 1 (782 aa).

Disordered stretches follow at residues 96 to 153, 177 to 217, 332 to 372, and 460 to 481; these read GPKH…HSKP, LPES…YSAP, VREH…SKHM, and EVDS…GKHL. Residues 108-117 show a composition bias toward low complexity; it reads SGSFSRESSS. A compositionally biased stretch (polar residues) spans 208–217; that stretch reads GGSQLTYSAP. The span at 335–347 shows a compositional bias: basic residues; that stretch reads HKHKSSHRSRKNR. Positions 348–366 are enriched in polar residues; it reads GLSQQTSDAASQKSETGLQ. Over residues 471-481 the composition is skewed to basic and acidic residues; it reads SGDHKGSGKHL.

In terms of assembly, interacts with AFPH2/NINJA. In terms of tissue distribution, expressed in root vasculature, shoot apical meristem (SAM) and leaves.

Its function is as follows. Activator of mRNA decapping. Involved in mRNA decay via decapping. Involved in the regulation of root stem cell niche identity. Maintains root stem cell niche stability through the interaction with the negative regulator of jasmonate signaling AFPH2/NINJA, and the regulation of cell division. This chain is Protein PAT1 homolog 1, found in Arabidopsis thaliana (Mouse-ear cress).